A 520-amino-acid chain; its full sequence is Basal body-orientation factor 1 (520 aa).

Over residues 1 to 21 (MPKKKGKGKGKGKGKGKGKKD) the composition is skewed to basic residues. The interval 1–34 (MPKKKGKGKGKGKGKGKGKKDGKHDSKADRESEI) is disordered. Residues 22–34 (GKHDSKADRESEI) show a composition bias toward basic and acidic residues. Coiled-coil stretches lie at residues 27-175 (KADR…REKM) and 245-386 (VKEA…RQEA). The segment at 468 to 492 (AHPPALSASSSEKIQVSSDAGSTVE) is disordered. A compositionally biased stretch (low complexity) spans 469-478 (HPPALSASSS). Positions 479 to 492 (EKIQVSSDAGSTVE) are enriched in polar residues.

Belongs to the BBOF1 family.

The protein localises to the cytoplasm. The protein resides in the cytoskeleton. Its subcellular location is the cilium basal body. Its function is as follows. Basal body protein required in multiciliate cells to align and maintain cilia orientation in response to flow. May act by mediating a maturation step that stabilizes and aligns cilia orientation. Not required to respond to planar cell polarity (PCP) or flow-based orientation cues. The protein is Basal body-orientation factor 1 of Danio rerio (Zebrafish).